Consider the following 59-residue polypeptide: UPF0434 protein Shew185_1670 (59 aa).

This sequence belongs to the UPF0434 family.

The sequence is that of UPF0434 protein Shew185_1670 from Shewanella baltica (strain OS185).